The primary structure comprises 701 residues: Elongation factor G (701 aa).

The tr-type G domain occupies 8-290 (SLYRNIGISA…AVVELLPAPT (283 aa)). GTP contacts are provided by residues 17–24 (AHIDAGKT), 88–92 (DTPGH), and 142–145 (NKMD).

The protein belongs to the TRAFAC class translation factor GTPase superfamily. Classic translation factor GTPase family. EF-G/EF-2 subfamily.

The protein resides in the cytoplasm. In terms of biological role, catalyzes the GTP-dependent ribosomal translocation step during translation elongation. During this step, the ribosome changes from the pre-translocational (PRE) to the post-translocational (POST) state as the newly formed A-site-bound peptidyl-tRNA and P-site-bound deacylated tRNA move to the P and E sites, respectively. Catalyzes the coordinated movement of the two tRNA molecules, the mRNA and conformational changes in the ribosome. The polypeptide is Elongation factor G (Neisseria meningitidis serogroup C (strain 053442)).